A 139-amino-acid chain; its full sequence is Aspartate 1-decarboxylase (139 aa).

Ser25 serves as the catalytic Schiff-base intermediate with substrate; via pyruvic acid. Pyruvic acid (Ser) is present on Ser25. Residue Thr57 coordinates substrate. Tyr58 acts as the Proton donor in catalysis. 73-75 (GAA) lines the substrate pocket. The tract at residues 116-139 (ELGSDPAHAPEGSGLTSPRSLTFA) is disordered. A compositionally biased stretch (polar residues) spans 129-139 (GLTSPRSLTFA).

It belongs to the PanD family. In terms of assembly, heterooctamer of four alpha and four beta subunits. It depends on pyruvate as a cofactor. Is synthesized initially as an inactive proenzyme, which is activated by self-cleavage at a specific serine bond to produce a beta-subunit with a hydroxyl group at its C-terminus and an alpha-subunit with a pyruvoyl group at its N-terminus.

Its subcellular location is the cytoplasm. The enzyme catalyses L-aspartate + H(+) = beta-alanine + CO2. Its pathway is cofactor biosynthesis; (R)-pantothenate biosynthesis; beta-alanine from L-aspartate: step 1/1. In terms of biological role, catalyzes the pyruvoyl-dependent decarboxylation of aspartate to produce beta-alanine. The protein is Aspartate 1-decarboxylase of Nocardia farcinica (strain IFM 10152).